The following is a 392-amino-acid chain: Methylthioribose-1-phosphate isomerase (392 aa).

The active-site Proton donor is the aspartate 268.

Belongs to the eIF-2B alpha/beta/delta subunits family. MtnA subfamily.

Its subcellular location is the cytoplasm. It localises to the nucleus. The enzyme catalyses 5-(methylsulfanyl)-alpha-D-ribose 1-phosphate = 5-(methylsulfanyl)-D-ribulose 1-phosphate. It participates in amino-acid biosynthesis; L-methionine biosynthesis via salvage pathway; L-methionine from S-methyl-5-thio-alpha-D-ribose 1-phosphate: step 1/6. Functionally, catalyzes the interconversion of methylthioribose-1-phosphate (MTR-1-P) into methylthioribulose-1-phosphate (MTRu-1-P). This Ajellomyces capsulatus (strain G186AR / H82 / ATCC MYA-2454 / RMSCC 2432) (Darling's disease fungus) protein is Methylthioribose-1-phosphate isomerase.